A 185-amino-acid chain; its full sequence is Lactoylglutathione lyase (185 aa).

The tract at residues 1-22 (MASEARESPANNPGLSTNRDEA) is disordered. Positions 27 to 174 (IMQQTMFRIK…DGYWIEIFDL (148 aa)) constitute a VOC domain. Positions 30 and 34 each coordinate substrate. Gln-30 serves as a coordination point for Zn(2+). Glu-96 is a Zn(2+) binding site. Substrate-binding positions include Asn-100, Arg-120, His-124, and 154-155 (KM). His-124 provides a ligand contact to Zn(2+). Glu-170 is a Zn(2+) binding site. The active-site Proton donor/acceptor is Glu-170.

The protein belongs to the glyoxalase I family. The cofactor is Zn(2+).

The catalysed reaction is (R)-S-lactoylglutathione = methylglyoxal + glutathione. It participates in secondary metabolite metabolism; methylglyoxal degradation; (R)-lactate from methylglyoxal: step 1/2. Catalyzes the conversion of hemimercaptal, formed from methylglyoxal and glutathione, to S-lactoylglutathione. The protein is Lactoylglutathione lyase of Arabidopsis thaliana (Mouse-ear cress).